Consider the following 85-residue polypeptide: Senescence-associated and QQS-related protein (85 aa).

The segment covering 1-24 (MSFRKVEKKPTEMGRNMTHEKSDS) has biased composition (basic and acidic residues). Disordered regions lie at residues 1–35 (MSFRKVEKKPTEMGRNMTHEKSDSDSDNEGAPMTV) and 55–85 (SGKARSNYNLTGTAKGTGPINSFSRKHFPNY). The span at 58–77 (ARSNYNLTGTAKGTGPINSF) shows a compositional bias: polar residues.

In terms of tissue distribution, expressed predominantly within leaves and cotyledons vasculatures. Mainly observed in fully expanded leaves, at the base of mature inflorescences, in senescing leaves and cauline leaves, and, to a lower extent, in hypocotyls and rosette leaves prior to flowering.

Its function is as follows. Plays a role in carbon allocation, including during senescence and stresses, thus impacting starch accumulation. The chain is Senescence-associated and QQS-related protein from Arabidopsis thaliana (Mouse-ear cress).